A 107-amino-acid polypeptide reads, in one-letter code: SH3 domain-binding glutamic acid-rich-like protein 2 (107 aa).

Residues 61-67 (QGNPLPP) carry the SH3-binding motif.

Belongs to the SH3BGR family.

The protein resides in the nucleus. In Pongo abelii (Sumatran orangutan), this protein is SH3 domain-binding glutamic acid-rich-like protein 2 (SH3BGRL2).